The sequence spans 257 residues: Hydroxyacylglutathione hydrolase (257 aa).

Positions 54, 56, 58, 59, 113, 137, and 175 each coordinate Zn(2+).

It belongs to the metallo-beta-lactamase superfamily. Glyoxalase II family. Monomer. The cofactor is Zn(2+).

It catalyses the reaction an S-(2-hydroxyacyl)glutathione + H2O = a 2-hydroxy carboxylate + glutathione + H(+). The protein operates within secondary metabolite metabolism; methylglyoxal degradation; (R)-lactate from methylglyoxal: step 2/2. Thiolesterase that catalyzes the hydrolysis of S-D-lactoyl-glutathione to form glutathione and D-lactic acid. This is Hydroxyacylglutathione hydrolase from Trichodesmium erythraeum (strain IMS101).